A 1522-amino-acid polypeptide reads, in one-letter code: Lysophospholipase NTE1 (1522 aa).

Residues 1-73 (MVDGTYVNSS…SLLVYLINGT (73 aa)) are Lumenal-facing. The chain crosses the membrane as a helical span at residues 74-94 (VPFYLVVLGSVFTPIIVYLIL). The Cytoplasmic portion of the chain corresponds to 95–1522 (RSRVLSAYSR…IHLLHRRNSI (1428 aa)). 3 disordered regions span residues 443–468 (SVQE…TPNK), 485–523 (DLLS…ASSP), and 535–556 (SQNF…PSVV). Composition is skewed to low complexity over residues 498–511 (KTAS…PRIS) and 540–555 (PLSS…KPSV). A nucleoside 3',5'-cyclic phosphate is bound by residues 661–782 (PINV…LTKL) and 778–918 (TLTK…VAHK). 2 disordered regions span residues 828–852 (QKSK…DNQP) and 1125–1145 (SSQN…GAPP). Residues 1219-1383 (LVLGGGGARG…LDNLPVLEMK (165 aa)) form the PNPLA domain. Positions 1223 to 1228 (GGGARG) match the GXGXXG motif. Positions 1250 to 1254 (GTSIG) match the GXSXG motif. Ser1252 functions as the Nucleophile in the catalytic mechanism. Residue Asp1370 is the Proton acceptor of the active site. The DGA/G signature appears at 1370–1372 (DGG).

This sequence belongs to the NTE family.

The protein resides in the endoplasmic reticulum membrane. The enzyme catalyses a 1-acyl-sn-glycero-3-phosphocholine + H2O = sn-glycerol 3-phosphocholine + a fatty acid + H(+). With respect to regulation, inhibited by organophosphorus esters. Intracellular phospholipase B that catalyzes the double deacylation of phosphatidylcholine (PC) to glycerophosphocholine (GroPCho). Plays an important role in membrane lipid homeostasis. Responsible for the rapid PC turnover in response to inositol, elevated temperatures, or when choline is present in the growth medium. In Eremothecium gossypii (strain ATCC 10895 / CBS 109.51 / FGSC 9923 / NRRL Y-1056) (Yeast), this protein is Lysophospholipase NTE1 (NTE1).